Here is a 103-residue protein sequence, read N- to C-terminus: Large ribosomal subunit protein bL21 (103 aa).

Belongs to the bacterial ribosomal protein bL21 family. In terms of assembly, part of the 50S ribosomal subunit. Contacts protein L20.

In terms of biological role, this protein binds to 23S rRNA in the presence of protein L20. This Chromohalobacter salexigens (strain ATCC BAA-138 / DSM 3043 / CIP 106854 / NCIMB 13768 / 1H11) protein is Large ribosomal subunit protein bL21.